The sequence spans 530 residues: Arginine--tRNA ligase (530 aa).

A 'HIGH' region motif is present at residues 113 to 123 (ANPTGPLHIGH).

This sequence belongs to the class-I aminoacyl-tRNA synthetase family. As to quaternary structure, monomer.

It is found in the cytoplasm. It carries out the reaction tRNA(Arg) + L-arginine + ATP = L-arginyl-tRNA(Arg) + AMP + diphosphate. This chain is Arginine--tRNA ligase, found in Campylobacter jejuni subsp. jejuni serotype O:2 (strain ATCC 700819 / NCTC 11168).